Consider the following 509-residue polypeptide: 5-OH-xanthotoxin synthase (509 aa).

Residues 5 to 25 (AVVILLILAFPIASVYVLFYH) traverse the membrane as a helical segment. A substrate specificity region spans residues 368-373 (TGALLI). Cysteine 449 contributes to the heme binding site.

The protein belongs to the cytochrome P450 family. It depends on heme as a cofactor.

It is found in the microsome membrane. The enzyme catalyses xanthotoxin + reduced [NADPH--hemoprotein reductase] + O2 = 5-hydroxyxanthotoxin + oxidized [NADPH--hemoprotein reductase] + H2O + 2 H(+). Its pathway is secondary metabolite biosynthesis. Functionally, involved in the biosynthesis of coumarins and furanocoumarins (FCs), natural products required for defense responses against attacks by predators with potential medical and agroindustrial usages such as anticoagulant, rodenticide and artificial vanilla substitutes. Catalyzes the conversion of xanthotoxin into 5-hydroxyxanthotoxin. In Ammi majus (Bishop's weed), this protein is 5-OH-xanthotoxin synthase.